Here is a 179-residue protein sequence, read N- to C-terminus: Casparian strip membrane protein 1 (179 aa).

Residues 1–17 (MKAGPLQLGVVPPANRA) are Cytoplasmic-facing. Residues 18 to 38 (IAILDFFLRPIAIVGTLASAI) form a helical membrane-spanning segment. Residues 39–67 (AMATTNQTLPFFSQFIRFRAKFNDLPSFT) are Extracellular-facing. Asn44 carries N-linked (GlcNAc...) asparagine glycosylation. A helical transmembrane segment spans residues 68 to 88 (FFVVASSIVSAYLILSLGFSI). Residues 89–100 (LHIAKSNLVNSR) lie on the Cytoplasmic side of the membrane. The helical transmembrane segment at 101-121 (VLLLLLDTAAMGLLMAGSAAA) threads the bilayer. Topologically, residues 122-154 (TAIVQLAHKGNNKVNWFAICQQYNSFCKRVSGS) are extracellular. Residues 155–175 (LIGSYAGVVVLILLILLSGVA) form a helical membrane-spanning segment. Residues 176–179 (LSRR) lie on the Cytoplasmic side of the membrane.

This sequence belongs to the Casparian strip membrane proteins (CASP) family. As to quaternary structure, homodimer and heterodimers.

It localises to the cell membrane. In terms of biological role, regulates membrane-cell wall junctions and localized cell wall deposition. Required for establishment of the Casparian strip membrane domain (CSD) and the subsequent formation of Casparian strips, a cell wall modification of the root endodermis that determines an apoplastic barrier between the intraorganismal apoplasm and the extraorganismal apoplasm and prevents lateral diffusion. This Lactuca sativa (Garden lettuce) protein is Casparian strip membrane protein 1.